A 218-amino-acid polypeptide reads, in one-letter code: N-alpha-acetyltransferase 11 (218 aa).

The interaction with NAA15 stretch occupies residues 1–58; the sequence is MNIRNARPDDLMNMQHCNLLCLPENYQMKYYFYHGLSWPQLSYIAEDEDGKIVGYVLA. The 152-residue stretch at 1–152 folds into the N-acetyltransferase domain; it reads MNIRNARPDD…DAYAMKRDLS (152 aa). The disordered stretch occupies residues 175 to 218; sequence EETQGGTLPDAGEACLPKNPTSKDSGSSDSTDVQDSSEDLDSIS. The span at 196-205 shows a compositional bias: low complexity; it reads SKDSGSSDST. Over residues 209–218 the composition is skewed to acidic residues; that stretch reads DSSEDLDSIS.

It belongs to the acetyltransferase family. ARD1 subfamily. As to quaternary structure, component of the N-terminal acetyltransferase A (NatA) complex composed of NAA11 and NAA15. Interacts with HIF1A.

Its subcellular location is the cytoplasm. The protein localises to the nucleus. It catalyses the reaction N-terminal glycyl-[protein] + acetyl-CoA = N-terminal N(alpha)-acetylglycyl-[protein] + CoA + H(+). It carries out the reaction N-terminal L-alanyl-[protein] + acetyl-CoA = N-terminal N(alpha)-acetyl-L-alanyl-[protein] + CoA + H(+). The enzyme catalyses N-terminal L-seryl-[protein] + acetyl-CoA = N-terminal N(alpha)-acetyl-L-seryl-[protein] + CoA + H(+). The catalysed reaction is N-terminal L-valyl-[protein] + acetyl-CoA = N-terminal N(alpha)-acetyl-L-valyl-[protein] + CoA + H(+). It catalyses the reaction N-terminal L-cysteinyl-[protein] + acetyl-CoA = N-terminal N(alpha)-acetyl-L-cysteinyl-[protein] + CoA + H(+). It carries out the reaction N-terminal L-threonyl-[protein] + acetyl-CoA = N-terminal N(alpha)-acetyl-L-threonyl-[protein] + CoA + H(+). In terms of biological role, displays alpha (N-terminal) acetyltransferase activity. Proposed alternative catalytic subunit of the N-terminal acetyltransferase A (NatA) complex. This chain is N-alpha-acetyltransferase 11 (Naa11), found in Mus musculus (Mouse).